Consider the following 32-residue polypeptide: Seminal plasma protein PDC-109 (32 aa).

The interval D1–N32 is disordered. T11 carries an O-linked (GalNAc...) threonine glycan. The region spanning H19–N32 is the Fibronectin type-II domain.

This sequence belongs to the seminal plasma protein family. Homodimer.

It localises to the secreted. Functionally, could enhance the fertilizing capacity of bull spermatozoa upon interaction with heparin-like glycosaminoglycans present in the female genital tract. Exhibits both simulatory and inhibitory actions on the release of pituitary gonadotropins. Binds to heparin and gelatin. In Bos indicus (Zebu), this protein is Seminal plasma protein PDC-109.